Consider the following 335-residue polypeptide: MGKLDIIEKKGTERLKRGFAKMVKGGVIMDVTNAEQARIAEEAGAVAVMALHRVPADIRKAGGVARMAPIEKIQEIMDAVTIPVMAKVRIGHVAEARILEALGVDMIDESEVLTPSDPYFHIDKREFKIPFVCGNRNLGEAVRRIWEGAAMMRTKGEAGTGNIIEAVRHVRLLKDNIALLQRMTDEQIYGVAEKFAEPYLRLAFEVREISGLPKQVLENEPVYGHYTYREIVEGLYKILLEIKKLGRLPVVNFAAGGVATPADAALMMQMGMDGVFVGSGIFKSSNPPKMARAIVEAVNHWDEPDVLVEISKEIGEPMRGQDIEELEVRLEERGV.

Asp30 contributes to the D-ribose 5-phosphate binding site. Lys87 serves as the catalytic Schiff-base intermediate with D-ribose 5-phosphate. A D-ribose 5-phosphate-binding site is contributed by Gly159. Arg171 provides a ligand contact to D-glyceraldehyde 3-phosphate. Residues Gly257 and 278-279 contribute to the D-ribose 5-phosphate site; that span reads GS.

The protein belongs to the PdxS/SNZ family. As to quaternary structure, in the presence of PdxT, forms a dodecamer of heterodimers.

It carries out the reaction aldehydo-D-ribose 5-phosphate + D-glyceraldehyde 3-phosphate + L-glutamine = pyridoxal 5'-phosphate + L-glutamate + phosphate + 3 H2O + H(+). It participates in cofactor biosynthesis; pyridoxal 5'-phosphate biosynthesis. Functionally, catalyzes the formation of pyridoxal 5'-phosphate from ribose 5-phosphate (RBP), glyceraldehyde 3-phosphate (G3P) and ammonia. The ammonia is provided by the PdxT subunit. Can also use ribulose 5-phosphate and dihydroxyacetone phosphate as substrates, resulting from enzyme-catalyzed isomerization of RBP and G3P, respectively. This Thermococcus gammatolerans (strain DSM 15229 / JCM 11827 / EJ3) protein is Pyridoxal 5'-phosphate synthase subunit PdxS.